Reading from the N-terminus, the 512-residue chain is Multidrug resistance protein 3 (512 aa).

14 helical membrane passes run 13-33 (FVVL…TIVA), 48-68 (KFAW…PIYG), 79-99 (FFLF…IAQT), 109-129 (IQGI…FDLF), 139-159 (GMFG…GAII), 163-183 (ISWH…LFFI), 200-220 (WGGA…LELG), 228-248 (SIQI…FFIV), 272-292 (ILAF…PIFV), 304-324 (GFIL…GGIF), 333-353 (LMLI…NMTP), 358-378 (VWLT…FSLL), 399-421 (SFLR…TNVF), and 475-495 (ITYV…TILF).

It belongs to the major facilitator superfamily. EmrB family.

The protein localises to the cell membrane. Confers resistance to puromycin, tosufloxacin and norfloxacin. This is Multidrug resistance protein 3 (bmr3) from Bacillus subtilis (strain 168).